Reading from the N-terminus, the 627-residue chain is Carene synthase 3, chloroplastic (627 aa).

The N-terminal 36 residues, 1-36, are a transit peptide targeting the chloroplast; the sequence is MSVISIVPLASKSCLYKSLMSSTHELKALCRPIATL. 3 residues coordinate Mg(2+): Asp-378, Asp-382, and Asp-530. The DDXXD motif motif lies at 378 to 382; it reads DDMYD.

The protein belongs to the terpene synthase family. Tpsd subfamily. It depends on Mg(2+) as a cofactor. Mn(2+) serves as cofactor.

The protein localises to the plastid. It localises to the chloroplast. It catalyses the reaction (2E)-geranyl diphosphate = (+)-car-3-ene + diphosphate. It participates in terpene metabolism; oleoresin biosynthesis. Its function is as follows. Terpene synthase (TPS) involved in defensive oleoresin formation in conifers in response to insect attack or other injury. This is Carene synthase 3, chloroplastic (TPS-3car3) from Picea sitchensis (Sitka spruce).